Here is a 71-residue protein sequence, read N- to C-terminus: Large ribosomal subunit protein bL31 (71 aa).

Residues Cys16, Cys18, Cys37, and Cys40 each contribute to the Zn(2+) site.

This sequence belongs to the bacterial ribosomal protein bL31 family. Type A subfamily. Part of the 50S ribosomal subunit. Zn(2+) serves as cofactor.

Binds the 23S rRNA. The protein is Large ribosomal subunit protein bL31 of Pseudoalteromonas translucida (strain TAC 125).